The primary structure comprises 376 residues: Succinyl-diaminopimelate desuccinylase (376 aa).

Residue histidine 74 coordinates Zn(2+). Aspartate 76 is a catalytic residue. Residue aspartate 105 participates in Zn(2+) binding. Glutamate 135 functions as the Proton acceptor in the catalytic mechanism. Zn(2+) is bound by residues glutamate 136, glutamate 164, and histidine 349.

It belongs to the peptidase M20A family. DapE subfamily. As to quaternary structure, homodimer. Zn(2+) is required as a cofactor. Requires Co(2+) as cofactor.

The catalysed reaction is N-succinyl-(2S,6S)-2,6-diaminopimelate + H2O = (2S,6S)-2,6-diaminopimelate + succinate. The protein operates within amino-acid biosynthesis; L-lysine biosynthesis via DAP pathway; LL-2,6-diaminopimelate from (S)-tetrahydrodipicolinate (succinylase route): step 3/3. Catalyzes the hydrolysis of N-succinyl-L,L-diaminopimelic acid (SDAP), forming succinate and LL-2,6-diaminopimelate (DAP), an intermediate involved in the bacterial biosynthesis of lysine and meso-diaminopimelic acid, an essential component of bacterial cell walls. The protein is Succinyl-diaminopimelate desuccinylase of Zymomonas mobilis subsp. mobilis (strain ATCC 31821 / ZM4 / CP4).